The chain runs to 339 residues: tRNA N6-adenosine threonylcarbamoyltransferase (339 aa).

Positions 111 and 115 each coordinate Fe cation. Substrate contacts are provided by residues 139–143 (LVSGG), Asp-172, Gly-185, Asp-189, and Asn-280. Asp-308 contributes to the Fe cation binding site.

Belongs to the KAE1 / TsaD family. Fe(2+) serves as cofactor.

It localises to the cytoplasm. The enzyme catalyses L-threonylcarbamoyladenylate + adenosine(37) in tRNA = N(6)-L-threonylcarbamoyladenosine(37) in tRNA + AMP + H(+). Required for the formation of a threonylcarbamoyl group on adenosine at position 37 (t(6)A37) in tRNAs that read codons beginning with adenine. Is involved in the transfer of the threonylcarbamoyl moiety of threonylcarbamoyl-AMP (TC-AMP) to the N6 group of A37, together with TsaE and TsaB. TsaD likely plays a direct catalytic role in this reaction. The protein is tRNA N6-adenosine threonylcarbamoyltransferase of Bacteroides thetaiotaomicron (strain ATCC 29148 / DSM 2079 / JCM 5827 / CCUG 10774 / NCTC 10582 / VPI-5482 / E50).